We begin with the raw amino-acid sequence, 204 residues long: Translation initiation factor 2 subunit beta (204 aa).

In terms of domain architecture, TRAM spans 146 to 204 (AIEEGKELEVHIESISKKGDGVARIGKYILYVAGTKAGQNVKVRITRISGQVAFTQKIL).

This sequence belongs to the eIF-2-beta/eIF-5 family. In terms of assembly, heterotrimer composed of an alpha, a beta and a gamma chain.

EIF-2 functions in the early steps of protein synthesis by forming a ternary complex with GTP and initiator tRNA. This Methanocorpusculum labreanum (strain ATCC 43576 / DSM 4855 / Z) protein is Translation initiation factor 2 subunit beta.